Consider the following 493-residue polypeptide: Glutamyl-tRNA(Gln) amidotransferase subunit A (493 aa).

Catalysis depends on charge relay system residues lysine 79 and serine 159. Serine 183 (acyl-ester intermediate) is an active-site residue.

Belongs to the amidase family. GatA subfamily. In terms of assembly, heterotrimer of A, B and C subunits.

It carries out the reaction L-glutamyl-tRNA(Gln) + L-glutamine + ATP + H2O = L-glutaminyl-tRNA(Gln) + L-glutamate + ADP + phosphate + H(+). Functionally, allows the formation of correctly charged Gln-tRNA(Gln) through the transamidation of misacylated Glu-tRNA(Gln) in organisms which lack glutaminyl-tRNA synthetase. The reaction takes place in the presence of glutamine and ATP through an activated gamma-phospho-Glu-tRNA(Gln). The sequence is that of Glutamyl-tRNA(Gln) amidotransferase subunit A from Brucella melitensis biotype 2 (strain ATCC 23457).